A 264-amino-acid chain; its full sequence is Leukocyte receptor cluster member 1 (264 aa).

Disordered stretches follow at residues 1–37 and 49–76; these read MNIL…RERR and FLRK…SGPV. A compositionally biased stretch (basic and acidic residues) spans 12–37; it reads RNKDNVARVRRDEAQAREEEKERERR. A coiled-coil region spans residues 16–46; it reads NVARVRRDEAQAREEEKERERRVLLAQQEAR. Position 59 is a phosphoserine (Ser59). The span at 59–75 shows a compositional bias: low complexity; that stretch reads SLPELEAAEAGAPGSGP. The stretch at 89 to 115 forms a coiled coil; sequence VIRGNKEYKEEKRQEKERQEKALGILT. The tract at residues 118 to 264 is disordered; sequence GQSAAEAQTQ…PRQQDPHLTH (147 aa). Composition is skewed to basic and acidic residues over residues 146 to 162 and 170 to 214; these read PDEK…EMQK and HGGD…RSRA. The stretch at 196–222 forms a coiled coil; it reads LDQLRAERLRREAAERSRAEALLARVQ. Ser245 carries the post-translational modification Phosphoserine.

The chain is Leukocyte receptor cluster member 1 (LENG1) from Homo sapiens (Human).